A 335-amino-acid chain; its full sequence is UPF0065 protein BB4329 (335 aa).

A signal peptide spans 1–39; that stretch reads MNKNIPAFHRRCHGLVQGLARTLLLAPVLLALSVPAAQA.

The protein belongs to the UPF0065 (bug) family.

The protein localises to the periplasm. The polypeptide is UPF0065 protein BB4329 (Bordetella bronchiseptica (strain ATCC BAA-588 / NCTC 13252 / RB50) (Alcaligenes bronchisepticus)).